Consider the following 338-residue polypeptide: DNA-directed RNA polymerase subunit alpha (338 aa).

Positions 1–234 are alpha N-terminal domain (alpha-NTD); the sequence is MIHKNWAELI…DQLSVFVNFD (234 aa). Residues 250 to 338 form an alpha C-terminal domain (alpha-CTD) region; the sequence is FDPRLLKKVD…DLAKRFDDQF (89 aa).

This sequence belongs to the RNA polymerase alpha chain family. Homodimer. The RNAP catalytic core consists of 2 alpha, 1 beta, 1 beta' and 1 omega subunit. When a sigma factor is associated with the core the holoenzyme is formed, which can initiate transcription.

It catalyses the reaction RNA(n) + a ribonucleoside 5'-triphosphate = RNA(n+1) + diphosphate. In terms of biological role, DNA-dependent RNA polymerase catalyzes the transcription of DNA into RNA using the four ribonucleoside triphosphates as substrates. The sequence is that of DNA-directed RNA polymerase subunit alpha from Paracoccus denitrificans (strain Pd 1222).